The primary structure comprises 271 residues: Dermonecrotic toxin LhSicTox-alphaIA2aiv (271 aa).

Histidine 3 is an active-site residue. Residues glutamate 23 and aspartate 25 each contribute to the Mg(2+) site. Residue histidine 39 is the Nucleophile of the active site. 2 cysteine pairs are disulfide-bonded: cysteine 43–cysteine 49 and cysteine 45–cysteine 188. Aspartate 83 contacts Mg(2+).

The protein belongs to the arthropod phospholipase D family. Class II subfamily. The cofactor is Mg(2+). Expressed by the venom gland.

The protein resides in the secreted. The catalysed reaction is an N-(acyl)-sphingosylphosphocholine = an N-(acyl)-sphingosyl-1,3-cyclic phosphate + choline. It catalyses the reaction an N-(acyl)-sphingosylphosphoethanolamine = an N-(acyl)-sphingosyl-1,3-cyclic phosphate + ethanolamine. It carries out the reaction a 1-acyl-sn-glycero-3-phosphocholine = a 1-acyl-sn-glycero-2,3-cyclic phosphate + choline. The enzyme catalyses a 1-acyl-sn-glycero-3-phosphoethanolamine = a 1-acyl-sn-glycero-2,3-cyclic phosphate + ethanolamine. Dermonecrotic toxins cleave the phosphodiester linkage between the phosphate and headgroup of certain phospholipids (sphingolipid and lysolipid substrates), forming an alcohol (often choline) and a cyclic phosphate. This toxin acts on sphingomyelin (SM). It may also act on ceramide phosphoethanolamine (CPE), lysophosphatidylcholine (LPC) and lysophosphatidylethanolamine (LPE), but not on lysophosphatidylserine (LPS), and lysophosphatidylglycerol (LPG). It acts by transphosphatidylation, releasing exclusively cyclic phosphate products as second products. Induces dermonecrosis, hemolysis, increased vascular permeability, edema, inflammatory response, and platelet aggregation. The chain is Dermonecrotic toxin LhSicTox-alphaIA2aiv from Loxosceles hirsuta (Recluse spider).